The following is a 293-amino-acid chain: EID1-like F-box protein 1 (293 aa).

The F-box domain occupies 16-68 (QCTKGHLNEDVLLLVFQHLNWNPKLVATLSCVCRWFDDFAKRVLWKEFCKTRA). Residues 245 to 293 (AIPSEDNNHTEKKQDNGFPRENVLKRRNSLLGGSENGPPPQKRLTNPNQ) are disordered. The span at 250–259 (DNNHTEKKQD) shows a compositional bias: basic and acidic residues.

This is EID1-like F-box protein 1 (EDL1) from Arabidopsis thaliana (Mouse-ear cress).